We begin with the raw amino-acid sequence, 277 residues long: Putative pyruvate, phosphate dikinase regulatory protein (277 aa).

151–158 (GISRTSKT) lines the ADP pocket.

The protein belongs to the pyruvate, phosphate/water dikinase regulatory protein family. PDRP subfamily.

It carries out the reaction N(tele)-phospho-L-histidyl/L-threonyl-[pyruvate, phosphate dikinase] + ADP = N(tele)-phospho-L-histidyl/O-phospho-L-threonyl-[pyruvate, phosphate dikinase] + AMP + H(+). It catalyses the reaction N(tele)-phospho-L-histidyl/O-phospho-L-threonyl-[pyruvate, phosphate dikinase] + phosphate + H(+) = N(tele)-phospho-L-histidyl/L-threonyl-[pyruvate, phosphate dikinase] + diphosphate. Functionally, bifunctional serine/threonine kinase and phosphorylase involved in the regulation of the pyruvate, phosphate dikinase (PPDK) by catalyzing its phosphorylation/dephosphorylation. This chain is Putative pyruvate, phosphate dikinase regulatory protein, found in Alkaliphilus oremlandii (strain OhILAs) (Clostridium oremlandii (strain OhILAs)).